Reading from the N-terminus, the 424-residue chain is Enolase (424 aa).

Glutamine 162 contacts (2R)-2-phosphoglycerate. The active-site Proton donor is the glutamate 204. Mg(2+) is bound by residues aspartate 241, glutamate 284, and aspartate 311. Residues lysine 336, arginine 365, serine 366, and lysine 387 each coordinate (2R)-2-phosphoglycerate. Lysine 336 serves as the catalytic Proton acceptor.

This sequence belongs to the enolase family. Mg(2+) is required as a cofactor.

Its subcellular location is the cytoplasm. The protein localises to the secreted. The protein resides in the cell surface. It catalyses the reaction (2R)-2-phosphoglycerate = phosphoenolpyruvate + H2O. The protein operates within carbohydrate degradation; glycolysis; pyruvate from D-glyceraldehyde 3-phosphate: step 4/5. Catalyzes the reversible conversion of 2-phosphoglycerate (2-PG) into phosphoenolpyruvate (PEP). It is essential for the degradation of carbohydrates via glycolysis. The protein is Enolase of Rhizobium leguminosarum bv. trifolii (strain WSM2304).